The chain runs to 140 residues: FLYWCH family member 2 (140 aa).

Disordered regions lie at residues methionine 1–phenylalanine 39 and threonine 83–leucine 140. A Phosphoserine modification is found at serine 21. Positions proline 98–aspartate 114 are enriched in basic and acidic residues. The span at alanine 118–glutamate 127 shows a compositional bias: low complexity.

The sequence is that of FLYWCH family member 2 (FLYWCH2) from Pongo abelii (Sumatran orangutan).